The chain runs to 134 residues: Large-conductance mechanosensitive channel (134 aa).

The next 2 helical transmembrane spans lie at 10–30 (FAMRGNVVDLAVGIIIGGAFG) and 76–96 (GAFLQTIVDFVIIAFSIFVVI).

The protein belongs to the MscL family. Homopentamer.

The protein resides in the cell inner membrane. In terms of biological role, channel that opens in response to stretch forces in the membrane lipid bilayer. May participate in the regulation of osmotic pressure changes within the cell. The polypeptide is Large-conductance mechanosensitive channel (Prosthecochloris aestuarii (strain DSM 271 / SK 413)).